The following is a 55-amino-acid chain: UPF0434 protein Erum1340/ERWE_CDS_01300 (55 aa).

The protein belongs to the UPF0434 family.

This chain is UPF0434 protein Erum1340/ERWE_CDS_01300, found in Ehrlichia ruminantium (strain Welgevonden).